The sequence spans 638 residues: Neuroendocrine convertase 2 (638 aa).

The signal sequence occupies residues 1–25; sequence MKGGCVSQWKAAAGFLFCVMVFASA. Residues 26 to 109 constitute a propeptide that is removed on maturation; it reads ERPVFTNHFL…QQEGFDRKKR (84 aa). The Peptidase S8 domain maps to 129–453; it reads QWYLINTGQA…YGVLDAGAMV (325 aa). Residues Asp167 and His208 each act as charge relay system in the active site. Disulfide bonds link Cys225/Cys376 and Cys317/Cys347. N-linked (GlcNAc...) asparagine glycosylation is present at Asn375. The active-site Charge relay system is the Ser384. The region spanning 461-597 is the P/Homo B domain; sequence TVPERFHCVG…TLMLHGTQSA (137 aa). Cys468 and Cys494 form a disulfide bridge. N-linked (GlcNAc...) asparagine glycosylation is found at Asn514 and Asn524.

The protein belongs to the peptidase S8 family. Furin subfamily.

It localises to the cytoplasmic vesicle. It is found in the secretory vesicle. The protein resides in the secreted. It catalyses the reaction Release of protein hormones and neuropeptides from their precursors, generally by hydrolysis of -Lys-Arg-|- bonds.. Serine endopeptidase which is involved in the processing of hormone and other protein precursors at sites comprised of pairs of basic amino acid residues. Responsible for the release of glucagon from proglucagon in pancreatic A cells. The chain is Neuroendocrine convertase 2 (PCSK2) from Homo sapiens (Human).